A 270-amino-acid chain; its full sequence is tRNA pseudouridine synthase A (270 aa).

Residue Asp52 is the Nucleophile of the active site. Tyr110 lines the substrate pocket.

It belongs to the tRNA pseudouridine synthase TruA family. As to quaternary structure, homodimer.

The catalysed reaction is uridine(38/39/40) in tRNA = pseudouridine(38/39/40) in tRNA. Functionally, formation of pseudouridine at positions 38, 39 and 40 in the anticodon stem and loop of transfer RNAs. The sequence is that of tRNA pseudouridine synthase A from Roseiflexus castenholzii (strain DSM 13941 / HLO8).